The chain runs to 549 residues: uncharacterized protein (549 aa).

Residues 1–19 (MNWRRIVWLLALVTLPTLA) form the signal peptide.

This is an uncharacterized protein from Escherichia coli (strain K12).